Consider the following 72-residue polypeptide: uncharacterized protein (72 aa).

The chain crosses the membrane as a helical span at residues 11 to 31 (WCCTVLSAFGVVILSVIAHLF).

It localises to the membrane. This is an uncharacterized protein from Saccharomyces cerevisiae (strain ATCC 204508 / S288c) (Baker's yeast).